Reading from the N-terminus, the 228-residue chain is Phosphatidate cytidylyltransferase (228 aa).

6 consecutive transmembrane segments (helical) span residues 31-51, 65-85, 93-113, 131-151, 165-185, and 206-226; these read FVIA…LVGL, INYL…LIFL, LVIM…MIGG, WTGL…VSLI, IYLF…DLFI, and GVLD…CINI.

Belongs to the CDS family.

The protein localises to the cell membrane. It carries out the reaction a 1,2-diacyl-sn-glycero-3-phosphate + CTP + H(+) = a CDP-1,2-diacyl-sn-glycerol + diphosphate. The protein operates within phospholipid metabolism; CDP-diacylglycerol biosynthesis; CDP-diacylglycerol from sn-glycerol 3-phosphate: step 3/3. This Rickettsia prowazekii (strain Madrid E) protein is Phosphatidate cytidylyltransferase (cdsA).